The sequence spans 440 residues: Xylose isomerase (440 aa).

Residues His100 and Asp103 contribute to the active site. The Mg(2+) site is built by Glu231, Glu267, His270, Asp295, Asp306, Asp308, and Asp338.

It belongs to the xylose isomerase family. Homotetramer. The cofactor is Mg(2+).

It is found in the cytoplasm. It carries out the reaction alpha-D-xylose = alpha-D-xylulofuranose. The sequence is that of Xylose isomerase from Paraburkholderia phytofirmans (strain DSM 17436 / LMG 22146 / PsJN) (Burkholderia phytofirmans).